Consider the following 112-residue polypeptide: Ribonuclease P protein component (112 aa).

Belongs to the RnpA family. As to quaternary structure, consists of a catalytic RNA component (M1 or rnpB) and a protein subunit.

It carries out the reaction Endonucleolytic cleavage of RNA, removing 5'-extranucleotides from tRNA precursor.. RNaseP catalyzes the removal of the 5'-leader sequence from pre-tRNA to produce the mature 5'-terminus. It can also cleave other RNA substrates such as 4.5S RNA. The protein component plays an auxiliary but essential role in vivo by binding to the 5'-leader sequence and broadening the substrate specificity of the ribozyme. This chain is Ribonuclease P protein component, found in Pelotomaculum thermopropionicum (strain DSM 13744 / JCM 10971 / SI).